A 284-amino-acid polypeptide reads, in one-letter code: Bifunctional protein FolD (284 aa).

NADP(+) contacts are provided by residues 165 to 167 (GRS) and serine 190.

This sequence belongs to the tetrahydrofolate dehydrogenase/cyclohydrolase family. In terms of assembly, homodimer.

It carries out the reaction (6R)-5,10-methylene-5,6,7,8-tetrahydrofolate + NADP(+) = (6R)-5,10-methenyltetrahydrofolate + NADPH. The catalysed reaction is (6R)-5,10-methenyltetrahydrofolate + H2O = (6R)-10-formyltetrahydrofolate + H(+). The protein operates within one-carbon metabolism; tetrahydrofolate interconversion. Its function is as follows. Catalyzes the oxidation of 5,10-methylenetetrahydrofolate to 5,10-methenyltetrahydrofolate and then the hydrolysis of 5,10-methenyltetrahydrofolate to 10-formyltetrahydrofolate. This is Bifunctional protein FolD from Streptococcus agalactiae serotype Ia (strain ATCC 27591 / A909 / CDC SS700).